The sequence spans 532 residues: Fatty aldehyde dehydrogenase HFD1 (532 aa).

Phosphoserine is present on Ser111. Residues 134–152 (IIAPFNFPLLLAFAPLAAA) traverse the membrane as a helical segment. 214–219 (GSPRVG) contributes to the NAD(+) binding site. Active-site residues include Glu236 and Cys273.

Belongs to the aldehyde dehydrogenase family.

It is found in the lipid droplet. The protein resides in the mitochondrion outer membrane. It localises to the endosome membrane. The protein localises to the cytoplasmic granule membrane. The enzyme catalyses an aldehyde + NAD(+) + H2O = a carboxylate + NADH + 2 H(+). The catalysed reaction is hexadecanoate + NADH + 2 H(+) = hexadecanal + NAD(+) + H2O. It catalyses the reaction 4-hydroxybenzaldehyde + NAD(+) + H2O = 4-hydroxybenzoate + NADH + 2 H(+). In terms of biological role, catalyzes the oxidation of long-chain aliphatic aldehydes to fatty acids. Responsible for conversion of the sphingosine 1-phosphate (S1P) degradation product hexadecenal to hexadecenoic acid. Involved in coenzyme Q (CoQ) biosynthesis, catalyzing the last step in the tyrosine to 4-hydroxybenzoate (4-HB) pathway. Oxidizes 4-hydroxybenzaldehyde (4-Hbz) to 4-HB, the aromatic precursor for coenzyme Q. The chain is Fatty aldehyde dehydrogenase HFD1 (HFD1) from Saccharomyces cerevisiae (strain ATCC 204508 / S288c) (Baker's yeast).